The chain runs to 734 residues: Alpha-catulin (734 aa).

A phosphoserine mark is found at Ser374 and Ser538.

The protein belongs to the vinculin/alpha-catenin family. In terms of assembly, interacts with ARHGEF1. Interacts with DTNA. The interaction is required for correct localization of both CTNL1 and DTNA. In terms of tissue distribution, widely expressed. Expressed at lower level in neural tissues and at the highest level in the adrenal gland.

The protein localises to the cytoplasm. It is found in the cytoskeleton. Its subcellular location is the cell membrane. May modulate the Rho pathway signaling by providing a scaffold for the Lbc Rho guanine nucleotide exchange factor (ARHGEF1). The protein is Alpha-catulin (CTNNAL1) of Homo sapiens (Human).